The sequence spans 445 residues: Bifunctional protein GlmU (445 aa).

A pyrophosphorylase region spans residues 1–218; sequence MRALVLAAGK…LLEITGVNTR (218 aa). UDP-N-acetyl-alpha-D-glucosamine contacts are provided by residues 6–9, lysine 20, glutamine 69, 74–75, 96–98, glycine 134, glutamate 147, asparagine 162, and asparagine 216; these read LAAG, GT, and YGD. Aspartate 98 lines the Mg(2+) pocket. Residue asparagine 216 participates in Mg(2+) binding. A linker region spans residues 219–239; it reads KTLVWLEEQLRMRKIEELLEN. An N-acetyltransferase region spans residues 240 to 445; that stretch reads GVTILDPATT…GWVLKKRKEE (206 aa). UDP-N-acetyl-alpha-D-glucosamine is bound by residues arginine 321 and lysine 339. Residue histidine 351 is the Proton acceptor of the active site. Tyrosine 354 and asparagine 365 together coordinate UDP-N-acetyl-alpha-D-glucosamine. Residues alanine 368, 374-375, serine 393, alanine 411, and arginine 428 each bind acetyl-CoA; that span reads NY.

In the N-terminal section; belongs to the N-acetylglucosamine-1-phosphate uridyltransferase family. This sequence in the C-terminal section; belongs to the transferase hexapeptide repeat family. Homotrimer. Requires Mg(2+) as cofactor.

The protein resides in the cytoplasm. It carries out the reaction alpha-D-glucosamine 1-phosphate + acetyl-CoA = N-acetyl-alpha-D-glucosamine 1-phosphate + CoA + H(+). The enzyme catalyses N-acetyl-alpha-D-glucosamine 1-phosphate + UTP + H(+) = UDP-N-acetyl-alpha-D-glucosamine + diphosphate. The protein operates within nucleotide-sugar biosynthesis; UDP-N-acetyl-alpha-D-glucosamine biosynthesis; N-acetyl-alpha-D-glucosamine 1-phosphate from alpha-D-glucosamine 6-phosphate (route II): step 2/2. It participates in nucleotide-sugar biosynthesis; UDP-N-acetyl-alpha-D-glucosamine biosynthesis; UDP-N-acetyl-alpha-D-glucosamine from N-acetyl-alpha-D-glucosamine 1-phosphate: step 1/1. Its pathway is bacterial outer membrane biogenesis; LPS lipid A biosynthesis. Functionally, catalyzes the last two sequential reactions in the de novo biosynthetic pathway for UDP-N-acetylglucosamine (UDP-GlcNAc). The C-terminal domain catalyzes the transfer of acetyl group from acetyl coenzyme A to glucosamine-1-phosphate (GlcN-1-P) to produce N-acetylglucosamine-1-phosphate (GlcNAc-1-P), which is converted into UDP-GlcNAc by the transfer of uridine 5-monophosphate (from uridine 5-triphosphate), a reaction catalyzed by the N-terminal domain. This Thermotoga petrophila (strain ATCC BAA-488 / DSM 13995 / JCM 10881 / RKU-1) protein is Bifunctional protein GlmU.